Here is a 326-residue protein sequence, read N- to C-terminus: tRNA(Ile)-lysidine synthase (326 aa).

25 to 30 (SGGQDS) contributes to the ATP binding site.

Belongs to the tRNA(Ile)-lysidine synthase family.

It localises to the cytoplasm. The catalysed reaction is cytidine(34) in tRNA(Ile2) + L-lysine + ATP = lysidine(34) in tRNA(Ile2) + AMP + diphosphate + H(+). Its function is as follows. Ligates lysine onto the cytidine present at position 34 of the AUA codon-specific tRNA(Ile) that contains the anticodon CAU, in an ATP-dependent manner. Cytidine is converted to lysidine, thus changing the amino acid specificity of the tRNA from methionine to isoleucine. The protein is tRNA(Ile)-lysidine synthase of Prochlorococcus marinus (strain NATL1A).